The sequence spans 291 residues: Probable 2-(5''-triphosphoribosyl)-3'-dephosphocoenzyme-A synthase (291 aa).

The protein belongs to the CitG/MdcB family.

It catalyses the reaction 3'-dephospho-CoA + ATP = 2'-(5''-triphospho-alpha-D-ribosyl)-3'-dephospho-CoA + adenine. In terms of biological role, involved in the formation of 2-(5''-phosphoribosyl)-3'-dephosphocoenzyme-A, the prosthetic group of the acyl-carrier protein of the malonate decarboxylase. The polypeptide is Probable 2-(5''-triphosphoribosyl)-3'-dephosphocoenzyme-A synthase (Pseudomonas savastanoi pv. phaseolicola (strain 1448A / Race 6) (Pseudomonas syringae pv. phaseolicola (strain 1448A / Race 6))).